A 159-amino-acid chain; its full sequence is MQGDPEVLRLLNEQLTTQLTAINQYFLHSKMQDNWGFTELAEHTRAESFDEMRHAEAITDRILLLDGLPNYQRLFSLRIGQTLREQFEADLAIEYEVMDRLKPAIILCREKQDSTTATLFEQIVADEEKHIDYLETQLELMDKLGVELYSAQCVSRPPS.

In terms of domain architecture, Ferritin-like diiron spans M1 to G145. E51 provides a ligand contact to Fe cation. A heme b-binding site is contributed by M52. H54, E94, E127, and H130 together coordinate Fe cation.

It belongs to the bacterioferritin family. In terms of assembly, homooligomer of 24 subunits, arranged as 12 dimers, that are packed together to form an approximately spherical molecule with a central cavity, in which large amounts of iron can be deposited. Heme b is required as a cofactor.

It catalyses the reaction 4 Fe(2+) + O2 + 4 H(+) = 4 Fe(3+) + 2 H2O. The enzyme catalyses Fe(2+)(in) = Fe(2+)(out). Functionally, iron-storage protein, whose ferroxidase center binds Fe(2+), oxidizes it using dioxygen to Fe(3+), and participates in the subsequent Fe(3+) oxide mineral core formation within the central cavity of the BFR protein shell. In Mycobacterium avium, this protein is Bacterioferritin (bfr).